We begin with the raw amino-acid sequence, 516 residues long: (R)-citramalate synthase CimA (516 aa).

Residues Leu8–Thr269 enclose the Pyruvate carboxyltransferase domain. Arg16 functions as the Proton donor in the catalytic mechanism. Pyruvate-binding positions include Arg16 to Asp17 and Tyr144. Asp17 contacts Mn(2+). The active-site Proton acceptor is Glu146. Pyruvate is bound at residue Thr179. His207 and His209 together coordinate Mn(2+).

This sequence belongs to the alpha-IPM synthase/homocitrate synthase family. As to quaternary structure, homodimer. Mn(2+) serves as cofactor.

It carries out the reaction pyruvate + acetyl-CoA + H2O = (3R)-citramalate + CoA + H(+). Its pathway is amino-acid biosynthesis; L-isoleucine biosynthesis; 2-oxobutanoate from pyruvate: step 1/3. Regulated by the end-product isoleucine via a feedback inhibition. The binding of isoleucine has inhibitory effects on the binding of both pyruvate and acetyl-CoA. May act via conformational change of the dimer interface of the regulatory domain, leading to inhibition of the catalytic reaction. Functionally, catalyzes the condensation of pyruvate and acetyl-coenzyme A to form (R)-citramalate. Shows strict substrate specificity for pyruvate. Cannot use alpha-ketoisovalerate, alpha-ketobutyrate, alpha-ketoisocaproate, alpha-ketoglutarate or glyoxylate. The protein is (R)-citramalate synthase CimA of Leptospira interrogans serogroup Icterohaemorrhagiae serovar Lai (strain 56601).